We begin with the raw amino-acid sequence, 670 residues long: DNA ligase (670 aa).

NAD(+)-binding positions include 32 to 36, 81 to 82, and Glu-110; these read DAYYD and SL. Lys-112 functions as the N6-AMP-lysine intermediate in the catalytic mechanism. NAD(+) contacts are provided by Arg-133, Glu-170, Lys-289, and Lys-313. Residues Cys-407, Cys-410, Cys-425, and Cys-431 each contribute to the Zn(2+) site. Residues 590 to 670 form the BRCT domain; it reads EDELRLKGQT…ELLVFLGLAG (81 aa).

It belongs to the NAD-dependent DNA ligase family. LigA subfamily. It depends on Mg(2+) as a cofactor. The cofactor is Mn(2+).

The enzyme catalyses NAD(+) + (deoxyribonucleotide)n-3'-hydroxyl + 5'-phospho-(deoxyribonucleotide)m = (deoxyribonucleotide)n+m + AMP + beta-nicotinamide D-nucleotide.. DNA ligase that catalyzes the formation of phosphodiester linkages between 5'-phosphoryl and 3'-hydroxyl groups in double-stranded DNA using NAD as a coenzyme and as the energy source for the reaction. It is essential for DNA replication and repair of damaged DNA. This is DNA ligase from Shewanella denitrificans (strain OS217 / ATCC BAA-1090 / DSM 15013).